We begin with the raw amino-acid sequence, 199 residues long: ATP-dependent Clp protease proteolytic subunit (199 aa).

Residues 1 to 23 (MTTSAARKGLRTRGSACPRATRS) form a disordered region. Ser-100 (nucleophile) is an active-site residue. The active site involves His-125.

It belongs to the peptidase S14 family. Fourteen ClpP subunits assemble into 2 heptameric rings which stack back to back to give a disk-like structure with a central cavity, resembling the structure of eukaryotic proteasomes.

Its subcellular location is the cytoplasm. It catalyses the reaction Hydrolysis of proteins to small peptides in the presence of ATP and magnesium. alpha-casein is the usual test substrate. In the absence of ATP, only oligopeptides shorter than five residues are hydrolyzed (such as succinyl-Leu-Tyr-|-NHMec, and Leu-Tyr-Leu-|-Tyr-Trp, in which cleavage of the -Tyr-|-Leu- and -Tyr-|-Trp bonds also occurs).. In terms of biological role, cleaves peptides in various proteins in a process that requires ATP hydrolysis. Has a chymotrypsin-like activity. Plays a major role in the degradation of misfolded proteins. The sequence is that of ATP-dependent Clp protease proteolytic subunit from Paracoccus denitrificans.